A 182-amino-acid chain; its full sequence is Bifunctional protein PyrR (182 aa).

Positions 99 to 111 (IVLVDDVIFTGRT) match the PRPP-binding motif.

Belongs to the purine/pyrimidine phosphoribosyltransferase family. PyrR subfamily. As to quaternary structure, homodimer and homohexamer; in equilibrium.

It carries out the reaction UMP + diphosphate = 5-phospho-alpha-D-ribose 1-diphosphate + uracil. Regulates transcriptional attenuation of the pyrimidine nucleotide (pyr) operon by binding in a uridine-dependent manner to specific sites on pyr mRNA. This disrupts an antiterminator hairpin in the RNA and favors formation of a downstream transcription terminator, leading to a reduced expression of downstream genes. In terms of biological role, also displays a weak uracil phosphoribosyltransferase activity which is not physiologically significant. This Caldicellulosiruptor saccharolyticus (strain ATCC 43494 / DSM 8903 / Tp8T 6331) protein is Bifunctional protein PyrR.